We begin with the raw amino-acid sequence, 194 residues long: Peptidyl-tRNA hydrolase (194 aa).

Position 17 (tyrosine 17) interacts with tRNA. Residue histidine 22 is the Proton acceptor of the active site. Positions 68, 70, and 116 each coordinate tRNA.

Belongs to the PTH family. In terms of assembly, monomer.

It localises to the cytoplasm. It carries out the reaction an N-acyl-L-alpha-aminoacyl-tRNA + H2O = an N-acyl-L-amino acid + a tRNA + H(+). Hydrolyzes ribosome-free peptidyl-tRNAs (with 1 or more amino acids incorporated), which drop off the ribosome during protein synthesis, or as a result of ribosome stalling. Functionally, catalyzes the release of premature peptidyl moieties from peptidyl-tRNA molecules trapped in stalled 50S ribosomal subunits, and thus maintains levels of free tRNAs and 50S ribosomes. This chain is Peptidyl-tRNA hydrolase, found in Pseudoalteromonas translucida (strain TAC 125).